The chain runs to 377 residues: Hsc70-interacting protein 2 (377 aa).

A disordered region spans residues 68-123; the sequence is AKANEPANAPEDSEDEKSLSDPESDVELDMEGVIEADSDPAQPMGNYSKKATEEEV. Serine 80 is subject to Phosphoserine. Positions 89 to 105 are enriched in acidic residues; it reads PESDVELDMEGVIEADS. TPR repeat units follow at residues 126-159, 161-193, and 195-227; these read ASEL…SPGN, LFHA…NSDL, and AGYK…DFDE. Residues 239-276 are a coiled coil; the sequence is NAKKIEQHRLKQERRQAERKIKERQRDQRRARKEQEKH. Residues 243 to 277 are compositionally biased toward basic and acidic residues; the sequence is IEQHRLKQERRQAERKIKERQRDQRRARKEQEKHN. Disordered regions lie at residues 243-302 and 344-377; these read IEQH…DILG and DVGA…DGLD. Residues 282–293 show a composition bias toward gly residues; that stretch reads GSSGEFSGGNPG. Residues 294–336 form the STI1 domain; the sequence is NGNMSDILGAMSDPEVSAAIQDILSNPGNITKYASNPKIYNLI. Basic and acidic residues predominate over residues 355-369; it reads KAGKPSEPKPKKDSA.

The protein belongs to the FAM10 family. Homotetramer. Interacts with Hsc70 as well as DNAJ homologs and Hsp90.

The protein resides in the cytoplasm. Functionally, one HIP oligomer binds the ATPase domains of at least two Hsc70 molecules dependent on activation of the Hsc70 ATPase by Hsp40. Stabilizes the ADP state of Hsc70 that has a high affinity for substrate protein. Through its own chaperone activity, it may contribute to the interaction of Hsc70 with various target proteins. The protein is Hsc70-interacting protein 2 of Drosophila melanogaster (Fruit fly).